The sequence spans 1456 residues: Leucine-rich repeat-containing protein 9 (1456 aa).

8 LRR repeats span residues 53–78 (FHNL…CLQL), 97–119 (CRNL…LEKL), 120–141 (IKLE…LQTL), 142–164 (KNLK…LDPN), 166–188 (QLEK…NLTK), 190–212 (TRLK…QLCN), 224–248 (LQRL…AMKK), and 264–287 (NEEL…RIKL). A disordered region spans residues 305-325 (SSKGQSDTTPEAEKPRNSEVV). The LRR 9 repeat unit spans residues 339–362 (LSALDDRVTFWNKKLHEIEAIYRT). Y525 carries the post-translational modification Phosphotyrosine. LRR repeat units follow at residues 661–683 (KPRP…TNIY), 684–705 (SHIV…LAKL), 706–727 (TGLR…VYHL), 729–748 (NLEY…GFRG), 749–772 (LMKL…INVL), 776–802 (TTSL…VIGR), 806–833 (LTHL…KITQ), 876–898 (YSKI…LEKL), 899–920 (ENLK…LESC), 921–942 (VNLE…ITRL), 943–965 (TKLS…TFDN), 967–991 (LHLH…TFTL), 993–1010 (ELYI…IYNL), 1013–1037 (LCNL…RFFV), 1082–1105 (FIQM…PVDH), 1106–1128 (FRNV…LIYL), 1129–1151 (PNVK…LKPQ), 1191–1214 (MQSL…QLNR), 1215–1237 (LRNL…LDNL), 1238–1260 (IVLQ…AFSK), 1262–1283 (SSLL…LQSL), 1284–1307 (VKLE…KLDV), and 1309–1335 (PSLR…IFRL).

In Mus musculus (Mouse), this protein is Leucine-rich repeat-containing protein 9 (Lrrc9).